We begin with the raw amino-acid sequence, 193 residues long: ER membrane protein complex subunit 4 (193 aa).

The next 2 helical transmembrane spans lie at 91–111 (ILAY…TLML) and 137–157 (LWPA…IGVY).

The protein belongs to the EMC4 family.

Its subcellular location is the endoplasmic reticulum membrane. The protein is ER membrane protein complex subunit 4 of Schizosaccharomyces pombe (strain 972 / ATCC 24843) (Fission yeast).